We begin with the raw amino-acid sequence, 133 residues long: Fatty acid-binding protein, heart (133 aa).

Ala-2 is modified (N-acetylalanine). At Thr-8 the chain carries Phosphothreonine. Tyr-20 bears the Phosphotyrosine; by Tyr-kinases mark. Position 23 is a phosphoserine (Ser-23). Thr-30 is modified (phosphothreonine). Ser-83 bears the Phosphoserine mark. Position 127–129 (127–129 (RTY)) interacts with (9Z)-octadecenoate. Hexadecanoate is bound at residue 127 to 129 (RTY). 127–129 (RTY) serves as a coordination point for octadecanoate.

This sequence belongs to the calycin superfamily. Fatty-acid binding protein (FABP) family.

Its subcellular location is the cytoplasm. Functionally, FABPs are thought to play a role in the intracellular transport of long-chain fatty acids and their acyl-CoA esters. This Mus musculus (Mouse) protein is Fatty acid-binding protein, heart (Fabp3).